Reading from the N-terminus, the 122-residue chain is Sterile alpha motif domain-containing protein 13 (122 aa).

An SAM domain is found at 51–119; sequence WAVMDVVNYF…KPLQTKHLKN (69 aa).

The polypeptide is Sterile alpha motif domain-containing protein 13 (SAMD13) (Homo sapiens (Human)).